A 347-amino-acid chain; its full sequence is NADH-ubiquinone oxidoreductase chain 2 (347 aa).

Transmembrane regions (helical) follow at residues P3–S23, H25–M45, A66–I86, I93–V115, I149–G169, I178–P198, M201–L221, F237–L257, N274–L294, and L325–V345.

The protein belongs to the complex I subunit 2 family. As to quaternary structure, core subunit of respiratory chain NADH dehydrogenase (Complex I) which is composed of 45 different subunits. Interacts with TMEM242.

It is found in the mitochondrion inner membrane. It catalyses the reaction a ubiquinone + NADH + 5 H(+)(in) = a ubiquinol + NAD(+) + 4 H(+)(out). Its function is as follows. Core subunit of the mitochondrial membrane respiratory chain NADH dehydrogenase (Complex I) which catalyzes electron transfer from NADH through the respiratory chain, using ubiquinone as an electron acceptor. Essential for the catalytic activity and assembly of complex I. This chain is NADH-ubiquinone oxidoreductase chain 2, found in Canis lupus (Gray wolf).